Reading from the N-terminus, the 530-residue chain is Inactive ubiquitin carboxyl-terminal hydrolase 17-like protein 4 (530 aa).

Residues 80–375 (AGLQNMGNTC…QAYVLFYIQK (296 aa)) enclose the USP domain. Residues 382–392 (SESVSRGREPR) show a composition bias toward basic and acidic residues. 2 disordered regions span residues 382–410 (SESVSRGREPRALGAEDTDRPATQGELKR) and 493–530 (NSTDQESMNTGTLASLQGRTRRSKGKNKHSKRSLLVCQ). The segment covering 495–510 (TDQESMNTGTLASLQG) has biased composition (polar residues). Positions 511 to 524 (RTRRSKGKNKHSKR) are enriched in basic residues.

This sequence belongs to the peptidase C19 family. USP17 subfamily.

It is found in the nucleus. It localises to the endoplasmic reticulum. The sequence is that of Inactive ubiquitin carboxyl-terminal hydrolase 17-like protein 4 (USP17L4) from Homo sapiens (Human).